The chain runs to 591 residues: Aspartate--tRNA(Asp/Asn) ligase (591 aa).

L-aspartate is bound at residue Glu-176. Residues 200 to 203 (QLFK) are aspartate. Position 222 (Arg-222) interacts with L-aspartate. ATP is bound by residues 222 to 224 (RDE) and Gln-231. His-450 serves as a coordination point for L-aspartate. Glu-484 is an ATP binding site. Arg-491 contributes to the L-aspartate binding site. 536 to 539 (GLDR) contributes to the ATP binding site.

The protein belongs to the class-II aminoacyl-tRNA synthetase family. Type 1 subfamily. Homodimer.

The protein localises to the cytoplasm. It carries out the reaction tRNA(Asx) + L-aspartate + ATP = L-aspartyl-tRNA(Asx) + AMP + diphosphate. Its function is as follows. Aspartyl-tRNA synthetase with relaxed tRNA specificity since it is able to aspartylate not only its cognate tRNA(Asp) but also tRNA(Asn). Reaction proceeds in two steps: L-aspartate is first activated by ATP to form Asp-AMP and then transferred to the acceptor end of tRNA(Asp/Asn). This chain is Aspartate--tRNA(Asp/Asn) ligase, found in Bacillus thuringiensis (strain Al Hakam).